Here is a 518-residue protein sequence, read N- to C-terminus: MDESGRQRPASHVAADISPQGAHRRSFKAWLASYIHSLSRRASGRPSGPSPRDGAVSGARPGSRRRSSFRERLRAGLSRWRVSRSSRRRSSPEAPGPAAKLRRPPLRRSETAMTSPPSPPSHILSLARIHKLCIPVFAVNPALRYTTLEIPGARSFGGSGGYGEVQLIREHKLAVKTIREKEWFAVELVATLLVGECALRGGRTHDIRGFITPLGFSLQQRQIVFPAYDMDLGKYIGQLASLRATTPSVATALHHCFTDLARAVVFLNTRCGISHLDIKCANVLVMLRSDAVSLRPAVLADFSLVTLNSNSTISRGQFCLQEPDLESPRGFGMPAALTTANFHTLVGHGYNQPPELSVKYLNNERAEFNNRPLKHDVGLAVDLYALGQTLLELLVSVYVAPSLGVPVTRVPGYQYFNNQLSPDFAVALLAYRCVLHPALFVNSAETNTHGLAYDVPEGIRRHLRNPKIRRAFTEQCINYQRTHKAVLSSVSLPPELRPLLVLVSRLCHANPAARHSLS.

2 disordered regions span residues 1-22 (MDESGRQRPASHVAADISPQGA) and 39-120 (SRRA…PSPP). The span at 44–61 (GRPSGPSPRDGAVSGARP) shows a compositional bias: low complexity. A Protein kinase domain is found at 151-518 (PGARSFGGSG…ANPAARHSLS (368 aa)). ATP is bound by residues 157–165 (GGSGGYGEV) and lysine 176. Aspartate 277 acts as the Proton acceptor in catalysis.

It belongs to the protein kinase superfamily. Ser/Thr protein kinase family. Post-translationally, autophosphorylated.

It localises to the virion tegument. It is found in the host nucleus. It carries out the reaction L-seryl-[protein] + ATP = O-phospho-L-seryl-[protein] + ADP + H(+). It catalyses the reaction L-threonyl-[protein] + ATP = O-phospho-L-threonyl-[protein] + ADP + H(+). Its function is as follows. Multifunctional serine/threonine kinase that plays a role in several processes including egress of virus particles from the nucleus, modulation of the actin cytoskeleton and regulation of viral and cellular gene expression. Regulates the nuclear localization of viral envelopment factors UL34 and UL31, by phosphorylating the US3 kinase, indicating a role in nuclear egress. Disrupts host nuclear lamins, including LMNA and LMNB1. Phosphorylates the viral Fc receptor composed of glycoproteins E (gE) and I (gI). Phosphorylation of glycoprotein E (gE) by UL13 alters its subcellular localization, from the host early endosome to the plasma membrane. Participates in the transcriptional regulation of cellular and viral mRNAs mainly by phosphorylating the viral transcriptional regulator ICP22. Additional substrates have been identified, including UL41, UL49 or host EF1D. The polypeptide is Serine/threonine-protein kinase UL13 (Homo sapiens (Human)).